Here is a 308-residue protein sequence, read N- to C-terminus: Cytochrome b (308 aa).

Transmembrane regions (helical) follow at residues 1-21 (SGSL…FLAA), 45-66 (WLIR…YLHI), 81-101 (WNIG…GYVL), and 146-166 (FFAL…VHLT). Heme b is bound by residues histidine 51 and histidine 65. Heme b is bound by residues histidine 150 and histidine 164. Histidine 169 is an a ubiquinone binding site. 3 helical membrane-spanning segments follow: residues 194-214 (TKDV…ALFS), 256-276 (LGGV…PLLH), and 288-308 (LSQI…WVGS).

It belongs to the cytochrome b family. The cytochrome bc1 complex contains 11 subunits: 3 respiratory subunits (MT-CYB, CYC1 and UQCRFS1), 2 core proteins (UQCRC1 and UQCRC2) and 6 low-molecular weight proteins (UQCRH/QCR6, UQCRB/QCR7, UQCRQ/QCR8, UQCR10/QCR9, UQCR11/QCR10 and a cleavage product of UQCRFS1). This cytochrome bc1 complex then forms a dimer. It depends on heme b as a cofactor.

It is found in the mitochondrion inner membrane. Functionally, component of the ubiquinol-cytochrome c reductase complex (complex III or cytochrome b-c1 complex) that is part of the mitochondrial respiratory chain. The b-c1 complex mediates electron transfer from ubiquinol to cytochrome c. Contributes to the generation of a proton gradient across the mitochondrial membrane that is then used for ATP synthesis. In Garritornis isidorei (Papuan babbler), this protein is Cytochrome b (MT-CYB).